The chain runs to 146 residues: Hemoglobin subunit beta-S/F (146 aa).

Valine 1 is modified (N-acetylvaline). The region spanning 2–146 (HLTDGEKNAI…VANALSHKYH (145 aa)) is the Globin domain. The residue at position 44 (serine 44) is a Phosphoserine. At lysine 59 the chain carries N6-acetyllysine. A heme b-binding site is contributed by histidine 63. The residue at position 82 (lysine 82) is an N6-acetyllysine. Residue histidine 92 coordinates heme b. Position 93 is an S-nitrosocysteine (cysteine 93). Lysine 144 is modified (N6-acetyllysine).

This sequence belongs to the globin family. Heterotetramer of two alpha chains and two beta chains. In terms of tissue distribution, red blood cells.

Functionally, involved in oxygen transport from the lung to the various peripheral tissues. The polypeptide is Hemoglobin subunit beta-S/F (Urocitellus townsendii (Townsend's ground squirrel)).